The chain runs to 100 residues: MARKSLIQREKKRQKLEQKYHLIRRSSKKEISKVPSLSDKWEIHGKLQSPPRNSAPTRLHRRCFLTGRPRANYRDFGLSGHILRAKVHACLLPGATRSSW.

It belongs to the universal ribosomal protein uS14 family. As to quaternary structure, part of the 30S ribosomal subunit.

Its subcellular location is the plastid. The protein localises to the chloroplast. Binds 16S rRNA, required for the assembly of 30S particles. The polypeptide is Small ribosomal subunit protein uS14c (Populus alba (White poplar)).